A 245-amino-acid chain; its full sequence is MPDYSYRPTIGRTYVYDNKYYKNLGSVIKNAKRKKHLLEHEEDEKHLDPLDHYMVAEDPFLGPGKNQKLTLFKEIRNVKPDTMKLIVNWSGKEFLRETWTRFVEDSFPIVNDQEVMDVFLVVNMRPTRPNRCYKFLAQHALRWDCDYVPHEVIRIVEPSYVGMNNEYRISLAKKGGGCPIMNIHAEYTNSFESFVNRVIWENFYKPIVYIGTDSSEEEEILIEVSLVFKVKEFAPDAPLFTGPAY.

Belongs to the polyhedrin family.

In terms of biological role, major component of the virus occlusion bodies, which are large proteinaceous structures (polyhedra), that protect the virus from the outside environment for extended periods until they are ingested by insect larvae. The polypeptide is Polyhedrin (PH) (Orgyia pseudotsugata multicapsid polyhedrosis virus (OpMNPV)).